Consider the following 1390-residue polypeptide: Hepatocyte growth factor receptor (1390 aa).

The signal sequence occupies residues 1 to 24 (MKAPAVLAPGILVLLFTLVQRSNG). The Extracellular segment spans residues 25–932 (ECKEALAKSE…VIVQPDQNFT (908 aa)). Residues 27 to 515 (KEALAKSEMN…TGKKITKIPL (489 aa)) form the Sema domain. N-linked (GlcNAc...) asparagine glycosylation is present at Asn45. Cystine bridges form between Cys95–Cys101, Cys98–Cys160, Cys133–Cys141, and Cys172–Cys175. Asn106 is a glycosylation site (N-linked (GlcNAc...) asparagine). A glycan (N-linked (GlcNAc...) asparagine) is linked at Asn149. N-linked (GlcNAc...) asparagine glycosylation occurs at Asn202. Disulfide bonds link Cys298–Cys363 and Cys385–Cys397. N-linked (GlcNAc...) asparagine glycans are attached at residues Asn399 and Asn405. Cystine bridges form between Cys520-Cys538, Cys526-Cys561, Cys529-Cys545, and Cys541-Cys551. 3 IPT/TIG domains span residues 563-655 (PAIY…FSYV), 657-739 (PVIT…FSYR), and 742-836 (PIVY…LIYV). An O-linked (Man) threonine glycan is attached at Thr582. N-linked (GlcNAc...) asparagine glycans are attached at residues Asn607 and Asn635. O-linked (Man) threonine glycosylation is found at Thr676 and Thr761. N-linked (GlcNAc...) asparagine glycans are attached at residues Asn785, Asn879, and Asn930. A helical membrane pass occupies residues 933–955 (GLIAGVVSISIALLLLLGFFLWL). Residues 956 to 1390 (KKRKQIKDLG…TRPASFWETS (435 aa)) are Cytoplasmic-facing. Residue Ser966 is modified to Phosphoserine. Residue Thr977 is modified to Phosphothreonine. Phosphoserine occurs at positions 990, 997, and 1000. Tyr1003 bears the Phosphotyrosine mark. In terms of domain architecture, Protein kinase spans 1078–1345 (VHFNEVIGRG…RISAIFSTFI (268 aa)). Residues 1084 to 1092 (IGRGHFGCV) and Lys1110 contribute to the ATP site. Asp1204 serves as the catalytic Proton acceptor. Residues 1212 to 1390 (LDEKFTVKVA…TRPASFWETS (179 aa)) are interaction with RANBP9. Residue Tyr1230 is modified to Phosphotyrosine. A phosphotyrosine; by autocatalysis mark is found at Tyr1234 and Tyr1235. Thr1289 carries the phosphothreonine modification. The tract at residues 1320-1359 (WHPKAEMRPSFSELVSRISAIFSTFIGEHYVHVNATYVNV) is interaction with MUC20. Phosphotyrosine; by autocatalysis is present on residues Tyr1349 and Tyr1356. Tyr1365 carries the post-translational modification Phosphotyrosine.

The protein belongs to the protein kinase superfamily. Tyr protein kinase family. In terms of assembly, heterodimer made of an alpha chain (50 kDa) and a beta chain (145 kDa) which are disulfide linked. Binds PLXNB1. Interacts when phosphorylated with downstream effectors including STAT3, PIK3R1, SRC, PCLG1, GRB2 and GAB1. Interacts with SPSB1, SPSB2 and SPSB4. Interacts with INPP5D/SHIP1. When phosphorylated at Tyr-1356, interacts with INPPL1/SHIP2. Interacts with RANBP9 and RANBP10, as well as SPSB1, SPSB2, SPSB3 and SPSB4. SPSB1 binding occurs in the presence and in the absence of HGF, however HGF treatment has a positive effect on this interaction. Interacts with MUC20; prevents interaction with GRB2 and suppresses hepatocyte growth factor-induced cell proliferation. Interacts with GRB10. Interacts with PTPN1 and PTPN2. Interacts with HSP90AA1 and HSP90AB1; the interaction suppresses MET kinase activity. Interacts with tensin TNS3. Interacts (when phosphorylated) with tensin TNS4 (via SH2 domain); the interaction increases MET protein stability by inhibiting MET endocytosis and subsequent lysosomal degradation. In terms of processing, autophosphorylated in response to ligand binding on Tyr-1234 and Tyr-1235 in the kinase domain leading to further phosphorylation of Tyr-1349 and Tyr-1356 in the C-terminal multifunctional docking site. Dephosphorylated by PTPRJ at Tyr-1349 and Tyr-1365. Dephosphorylated by PTPN1 and PTPN2. Post-translationally, ubiquitinated. Ubiquitination by CBL regulates the receptor stability and activity through proteasomal degradation. O-mannosylation of IPT/TIG domains by TMEM260 is required for protein maturation. O-mannosylated residues are composed of single mannose glycans that are not elongated or modified.

It is found in the membrane. It catalyses the reaction L-tyrosyl-[protein] + ATP = O-phospho-L-tyrosyl-[protein] + ADP + H(+). In its inactive state, the C-terminal tail interacts with the catalytic domain and inhibits the kinase activity. Upon ligand binding, the C-terminal tail is displaced and becomes phosphorylated, thus increasing the kinase activity. Its function is as follows. Receptor tyrosine kinase that transduces signals from the extracellular matrix into the cytoplasm by binding to hepatocyte growth factor/HGF ligand. Regulates many physiological processes including proliferation, scattering, morphogenesis and survival. Ligand binding at the cell surface induces autophosphorylation of MET on its intracellular domain that provides docking sites for downstream signaling molecules. Following activation by ligand, interacts with the PI3-kinase subunit PIK3R1, PLCG1, SRC, GRB2, STAT3 or the adapter GAB1. Recruitment of these downstream effectors by MET leads to the activation of several signaling cascades including the RAS-ERK, PI3 kinase-AKT, or PLCgamma-PKC. The RAS-ERK activation is associated with the morphogenetic effects while PI3K/AKT coordinates prosurvival effects. During embryonic development, MET signaling plays a role in gastrulation, development and migration of muscles and neuronal precursors, angiogenesis and kidney formation. In adults, participates in wound healing as well as organ regeneration and tissue remodeling. Also promotes differentiation and proliferation of hematopoietic cells. The protein is Hepatocyte growth factor receptor (MET) of Pan troglodytes (Chimpanzee).